The primary structure comprises 369 residues: Quinolinate synthase (369 aa).

The iminosuccinate site is built by His47 and Ser64. [4Fe-4S] cluster is bound at residue Cys111. Residues 142 to 144 (YVN) and Ser163 each bind iminosuccinate. Cys231 contacts [4Fe-4S] cluster. Residues 257-259 (HPE) and Thr274 each bind iminosuccinate. Residue Cys321 participates in [4Fe-4S] cluster binding.

The protein belongs to the quinolinate synthase family. Type 3 subfamily. [4Fe-4S] cluster is required as a cofactor.

Its subcellular location is the cytoplasm. It carries out the reaction iminosuccinate + dihydroxyacetone phosphate = quinolinate + phosphate + 2 H2O + H(+). The protein operates within cofactor biosynthesis; NAD(+) biosynthesis; quinolinate from iminoaspartate: step 1/1. In terms of biological role, catalyzes the condensation of iminoaspartate with dihydroxyacetone phosphate to form quinolinate. This chain is Quinolinate synthase, found in Bacillus pumilus (strain SAFR-032).